A 337-amino-acid polypeptide reads, in one-letter code: Ribosomal RNA small subunit methyltransferase H (337 aa).

Residues 36 to 38, D56, F82, D100, and Q107 contribute to the S-adenosyl-L-methionine site; that span reads GGH. A disordered region spans residues 315 to 337; it reads LEERSKRIPNPQSPIPASQGDAQ.

The protein belongs to the methyltransferase superfamily. RsmH family.

It localises to the cytoplasm. It carries out the reaction cytidine(1402) in 16S rRNA + S-adenosyl-L-methionine = N(4)-methylcytidine(1402) in 16S rRNA + S-adenosyl-L-homocysteine + H(+). Specifically methylates the N4 position of cytidine in position 1402 (C1402) of 16S rRNA. The protein is Ribosomal RNA small subunit methyltransferase H of Xanthomonas euvesicatoria pv. vesicatoria (strain 85-10) (Xanthomonas campestris pv. vesicatoria).